A 562-amino-acid chain; its full sequence is Serine/threonine-protein kinase STN7, chloroplastic (562 aa).

The transit peptide at 1–45 (MATISPGGAYIGTPSPFLGKKLKPFSLTSPILSFKPTVKLNSSCR) directs the protein to the chloroplast. The region spanning 134 to 452 (FVVGKKLGEG…AKAALAHPYF (319 aa)) is the Protein kinase domain. ATP contacts are provided by residues 140–148 (LGEGSFGVV) and K167. D279 (proton acceptor) is an active-site residue. Position 526 is a phosphoserine (S526). T537 and T541 each carry phosphothreonine.

It belongs to the protein kinase superfamily. Ser/Thr protein kinase family. In terms of processing, phosphorylated.

Its subcellular location is the plastid. The protein localises to the chloroplast thylakoid membrane. It catalyses the reaction L-seryl-[protein] + ATP = O-phospho-L-seryl-[protein] + ADP + H(+). It carries out the reaction L-threonyl-[protein] + ATP = O-phospho-L-threonyl-[protein] + ADP + H(+). Serine/threonine protein kinase required for state transition by phosphorylating light-harvesting complex II outer antennae (LCHII). State transition plays a central role in response to environmental changes and allows to adjust to changing light conditions via the redistribution of light excitation energy between photosystem II (PSII) and photosystem I (PSI). Phosphorylates the minor light harvesting protein LHCB4.2/CP29 and is involved in the light-dependent phosphorylation of TSP9. Acts as a key component of the long-term response (LTR) signaling pathway. Mediates phosphorylation-dependent PTAC16 subcellular localization to regulate plastid gene expression. This is Serine/threonine-protein kinase STN7, chloroplastic (STN7) from Arabidopsis thaliana (Mouse-ear cress).